The chain runs to 494 residues: NAD(+) hydrolase ThsA (494 aa).

The region spanning 11–295 (ATDKEVLIKE…TILQRYCRSK (285 aa)) is the Deacetylase sirtuin-type domain. 3 residues coordinate NAD(+): Ala-30, Asp-119, and His-157. The Proton acceptor role is filled by His-157. The segment at 296 to 494 (ILISGSAVEY…KIITALRAGR (199 aa)) is SLOG (STALD) domain, binds 3'cADPR. Gly-300, Ser-301, Leu-339, Phe-370, Arg-388, Lys-405, Gly-416, and Glu-420 together coordinate 3'cADPR.

The protein belongs to the soluble Thoeris ThsA family. As to quaternary structure, homotetramer.

It is found in the cytoplasm. The catalysed reaction is NAD(+) + H2O = ADP-D-ribose + nicotinamide + H(+). Probably activated by a signal molecule generated by endogenous ThsB1 and/or ThsB2. Can also be activated by the signal generated by ThsB of B.cereus. The activating molecule might be 3' cyclic ADP-D-ribose (3'cADPR). Probable NAD(+) hydrolyzing component (NADase) of the Thoeris antiviral defense system, composed of ThsA, TIR1 (thsB1) and TIR2 (thsB2). Activated by a signal molecule generated by endogenous TIR1, TIR2 or ThsB from B.cereus. After activation it binds and hydrolyzes NAD(+), leading to cell death and inhibition of phage replication. Expression of Thoeris in B.subtilis (strain BEST7003) confers resistance to phages phi29, phi3T, SPBeta, SBSphi11, SBSphi13, SBSphiJ, SPO1 and SPR but not SBSphiC. The TIR paralogs confer overlapping resistance to different phages. The polypeptide is NAD(+) hydrolase ThsA (Cytobacillus dafuensis (Bacillus dafuensis)).